The chain runs to 143 residues: Phosphatidylethanolamine-binding protein homolog R644 (143 aa).

The protein belongs to the phosphatidylethanolamine-binding protein family.

Its subcellular location is the virion. This Acanthamoeba polyphaga mimivirus (APMV) protein is Phosphatidylethanolamine-binding protein homolog R644.